The chain runs to 523 residues: Spastin (523 aa).

Residues 1 to 41 (MLDKLSKHKTMFYERVKEIDQILFSQQQAKQTQLDNLSNNN) lie on the Cytoplasmic side of the membrane. An intramembrane region (helical) is located at residues 42 to 58 (ASGGFFSGFMKMFSPLS). Composition is skewed to low complexity over residues 57-71 (LSTP…NSNT), 171-184 (QQPP…QQQP), and 193-210 (TALR…TANN). Disordered stretches follow at residues 57–77 (LSTP…AISQ) and 129–218 (GISS…LDQI). Topologically, residues 59–523 (TPPNSSSNNN…ESYGTFAKGI (465 aa)) are cytoplasmic.

Belongs to the AAA ATPase family. Spastin subfamily. As to quaternary structure, homohexamer. The homohexamer is stabilized by ATP-binding. The homohexamer may adopt a ring conformation through which microtubules pass prior to being severed.

The protein resides in the membrane. The catalysed reaction is n ATP + n H2O + a microtubule = n ADP + n phosphate + (n+1) alpha/beta tubulin heterodimers.. In terms of biological role, ATP-dependent microtubule severing protein. Stimulates microtubule minus-end depolymerization and poleward microtubule flux in the mitotic spindle. The protein is Spastin of Naegleria gruberi (Amoeba).